The sequence spans 76 residues: Small ribosomal subunit protein bS18 (76 aa).

Belongs to the bacterial ribosomal protein bS18 family. Part of the 30S ribosomal subunit. Forms a tight heterodimer with protein bS6.

Binds as a heterodimer with protein bS6 to the central domain of the 16S rRNA, where it helps stabilize the platform of the 30S subunit. This Mesoplasma florum (strain ATCC 33453 / NBRC 100688 / NCTC 11704 / L1) (Acholeplasma florum) protein is Small ribosomal subunit protein bS18.